Reading from the N-terminus, the 404-residue chain is High affinity immunoglobulin gamma Fc receptor I (404 aa).

A signal peptide spans 1-24 (MILTSFGDDMWLLTTLLLWVPVGG). At 25–297 (EVVNATKAVI…QVLGPQSSAP (273 aa)) the chain is on the extracellular side. 5 N-linked (GlcNAc...) asparagine glycosylation sites follow: Asn28, Asn48, Asn69, Asn168, and Asn249. Ig-like C2-type domains are found at residues 32–111 (AVIT…LQIH), 117–194 (LQAS…SITV), and 201–286 (PVLR…PELE). Cystine bridges form between Cys53–Cys95, Cys134–Cys177, and Cys221–Cys269. Residues 298–320 (VWFHILFYLSVGIMFSLNTVLYV) traverse the membrane as a helical segment. The tract at residues 321–342 (KIHRLQREKKYNLEVPLVSEQG) is interaction with EPB41L2. The Cytoplasmic portion of the chain corresponds to 321-404 (KIHRLQREKK…DSTGAQTSQS (84 aa)). A disordered region spans residues 346–404 (NSFQQVRSDGVYEEVTATASQTTPKEAPDGPRSSVGDCGPEQPEPLPPSDSTGAQTSQS). A Phosphoserine modification is found at Ser347. The residue at position 368 (Thr368) is a Phosphothreonine. The segment covering 394–404 (SDSTGAQTSQS) has biased composition (polar residues).

It belongs to the immunoglobulin superfamily. FCGR1 family. Interacts with FCERG1; forms a functional signaling complex. Interacts with FLNA; prevents FCGR1A degradation. Interacts with EPB41L2, LAT and PPL. Interacts with HCK and LYN. N-glycosylated. In terms of processing, phosphorylated on serine residues. Macrophage-specific.

The protein localises to the cell membrane. Its function is as follows. High affinity receptor for the Fc region of immunoglobulins gamma. Functions in both innate and adaptive immune responses. This Mus musculus (Mouse) protein is High affinity immunoglobulin gamma Fc receptor I (Fcgr1).